Consider the following 274-residue polypeptide: NH(3)-dependent NAD(+) synthetase (274 aa).

Position 46–53 (46–53) interacts with ATP; that stretch reads GISGGQDS. Residue aspartate 52 coordinates Mg(2+). Arginine 140 contacts deamido-NAD(+). Threonine 160 contributes to the ATP binding site. Residue glutamate 165 participates in Mg(2+) binding. Residues lysine 173 and aspartate 180 each coordinate deamido-NAD(+). The ATP site is built by lysine 189 and threonine 211. 260 to 261 serves as a coordination point for deamido-NAD(+); it reads HK.

It belongs to the NAD synthetase family. In terms of assembly, homodimer.

It catalyses the reaction deamido-NAD(+) + NH4(+) + ATP = AMP + diphosphate + NAD(+) + H(+). It participates in cofactor biosynthesis; NAD(+) biosynthesis; NAD(+) from deamido-NAD(+) (ammonia route): step 1/1. Functionally, catalyzes the ATP-dependent amidation of deamido-NAD to form NAD. Uses ammonia as a nitrogen source. In Pectobacterium atrosepticum (strain SCRI 1043 / ATCC BAA-672) (Erwinia carotovora subsp. atroseptica), this protein is NH(3)-dependent NAD(+) synthetase.